Reading from the N-terminus, the 143-residue chain is Small ribosomal subunit protein uS12B (143 aa).

At Pro-62 the chain carries 3,4-dihydroxyproline.

Belongs to the universal ribosomal protein uS12 family. As to quaternary structure, component of the small ribosomal subunit (SSU). Mature yeast ribosomes consist of a small (40S) and a large (60S) subunit. The 40S small subunit contains 1 molecule of ribosomal RNA (18S rRNA) and at least 33 different proteins. The large 60S subunit contains 3 rRNA molecules (25S, 5.8S and 5S rRNA) and at least 46 different proteins. Post-translationally, hydroxylation at Pro-62 affects translation termination efficiency.

The protein localises to the cytoplasm. It is found in the nucleus. Its subcellular location is the nucleolus. Functionally, component of the ribosome, a large ribonucleoprotein complex responsible for the synthesis of proteins in the cell. The small ribosomal subunit (SSU) binds messenger RNAs (mRNAs) and translates the encoded message by selecting cognate aminoacyl-transfer RNA (tRNA) molecules. The large subunit (LSU) contains the ribosomal catalytic site termed the peptidyl transferase center (PTC), which catalyzes the formation of peptide bonds, thereby polymerizing the amino acids delivered by tRNAs into a polypeptide chain. The nascent polypeptides leave the ribosome through a tunnel in the LSU and interact with protein factors that function in enzymatic processing, targeting, and the membrane insertion of nascent chains at the exit of the ribosomal tunnel. The protein is Small ribosomal subunit protein uS12B (rps2302) of Schizosaccharomyces pombe (strain 972 / ATCC 24843) (Fission yeast).